The primary structure comprises 460 residues: tRNA modification GTPase MnmE (460 aa).

(6S)-5-formyl-5,6,7,8-tetrahydrofolate-binding residues include R29, E91, and K132. The 157-residue stretch at 227–383 folds into the TrmE-type G domain; the sequence is GISIALIGKT…LIDTIIKKCG (157 aa). N237 provides a ligand contact to K(+). Residues 237 to 242, 256 to 262, and 281 to 284 contribute to the GTP site; these read NVGKSS, TNIPGTT, and DTAG. Mg(2+) is bound at residue S241. Residues T256, I258, and T261 each coordinate K(+). T262 serves as a coordination point for Mg(2+). K460 contributes to the (6S)-5-formyl-5,6,7,8-tetrahydrofolate binding site.

This sequence belongs to the TRAFAC class TrmE-Era-EngA-EngB-Septin-like GTPase superfamily. TrmE GTPase family. Homodimer. Heterotetramer of two MnmE and two MnmG subunits. Requires K(+) as cofactor.

Its subcellular location is the cytoplasm. Exhibits a very high intrinsic GTPase hydrolysis rate. Involved in the addition of a carboxymethylaminomethyl (cmnm) group at the wobble position (U34) of certain tRNAs, forming tRNA-cmnm(5)s(2)U34. The chain is tRNA modification GTPase MnmE from Prochlorococcus marinus (strain AS9601).